Here is an 842-residue protein sequence, read N- to C-terminus: Glucans biosynthesis glucosyltransferase H (842 aa).

6 consecutive transmembrane segments (helical) span residues 141 to 161, 194 to 214, 513 to 533, 570 to 590, 615 to 635, and 680 to 700; these read LLLL…TILP, ILLL…TALM, VFLT…FLAL, LFAS…ILIW, VLLA…AFLG, and FLFW…VSVI.

It belongs to the glycosyltransferase 2 family. OpgH subfamily.

The protein resides in the cell inner membrane. It functions in the pathway glycan metabolism; osmoregulated periplasmic glucan (OPG) biosynthesis. Involved in the biosynthesis of osmoregulated periplasmic glucans (OPGs). This is Glucans biosynthesis glucosyltransferase H from Enterobacter sp. (strain 638).